Consider the following 167-residue polypeptide: Transcription factor E (167 aa).

The HTH TFE/IIEalpha-type domain occupies N8–E90.

Belongs to the TFE family. Monomer. Interaction with RNA polymerase subunits RpoF and RpoE is necessary for Tfe stimulatory transcription activity. Able to interact with Tbp and RNA polymerase in the absence of DNA promoter. Interacts both with the preinitiation and elongation complexes.

Transcription factor that plays a role in the activation of archaeal genes transcribed by RNA polymerase. Facilitates transcription initiation by enhancing TATA-box recognition by TATA-box-binding protein (Tbp), and transcription factor B (Tfb) and RNA polymerase recruitment. Not absolutely required for transcription in vitro, but particularly important in cases where Tbp or Tfb function is not optimal. It dynamically alters the nucleic acid-binding properties of RNA polymerases by stabilizing the initiation complex and destabilizing elongation complexes. Seems to translocate with the RNA polymerase following initiation and acts by binding to the non template strand of the transcription bubble in elongation complexes. The sequence is that of Transcription factor E from Methanosarcina acetivorans (strain ATCC 35395 / DSM 2834 / JCM 12185 / C2A).